The primary structure comprises 339 residues: 5-dehydro-2-deoxygluconokinase (339 aa).

The protein belongs to the carbohydrate kinase PfkB family.

It carries out the reaction 5-dehydro-2-deoxy-D-gluconate + ATP = 6-phospho-5-dehydro-2-deoxy-D-gluconate + ADP + H(+). It functions in the pathway polyol metabolism; myo-inositol degradation into acetyl-CoA; acetyl-CoA from myo-inositol: step 5/7. Catalyzes the phosphorylation of 5-dehydro-2-deoxy-D-gluconate (2-deoxy-5-keto-D-gluconate or DKG) to 6-phospho-5-dehydro-2-deoxy-D-gluconate (DKGP). This Clostridium botulinum (strain Eklund 17B / Type B) protein is 5-dehydro-2-deoxygluconokinase.